Reading from the N-terminus, the 240-residue chain is Putative protein FAM10A4 (240 aa).

The disordered stretch occupies residues 38–94 (MGGTATQKAKSEENTKEEKPDSKVEEDLKADEPSSEESDLEIDKEGVIEPDTDAPQE). Positions 46–69 (AKSEENTKEEKPDSKVEEDLKADE) are enriched in basic and acidic residues. A compositionally biased stretch (acidic residues) spans 85–94 (IEPDTDAPQE). TPR repeat units lie at residues 110–143 (ANDK…NPRL), 145–177 (ILYA…NPDS), and 179–211 (QPYK…DYDE). The interval 220 to 240 (VQPRAQKIAEHQRKYERKREE) is disordered. Residues 226-240 (KIAEHQRKYERKREE) are compositionally biased toward basic and acidic residues.

This sequence belongs to the FAM10 family. As to expression, highly expressed in bone marrow and weakly in placenta, pancreas, heart and HeLa cell line.

The protein resides in the cytoplasm. The sequence is that of Putative protein FAM10A4 (ST13P4) from Homo sapiens (Human).